Consider the following 456-residue polypeptide: Glycosyl hydrolase family 109 protein (456 aa).

Positions 1–31 (MKLNRRHFLKTAGLSAAGILTSQLPLSSAEA) form a signal peptide, tat-type signal. NAD(+) is bound by residues 62 to 63 (QR), D84, 133 to 136 (WEWH), 153 to 154 (EV), and N182. Residues Y211, R230, 242–245 (YPTH), and Y324 contribute to the substrate site. Position 242 (Y242) interacts with NAD(+).

This sequence belongs to the Gfo/Idh/MocA family. Glycosyl hydrolase 109 subfamily. NAD(+) is required as a cofactor. Post-translationally, predicted to be exported by the Tat system. The position of the signal peptide cleavage has not been experimentally proven.

Glycosidase. The polypeptide is Glycosyl hydrolase family 109 protein (Shewanella pealeana (strain ATCC 700345 / ANG-SQ1)).